Reading from the N-terminus, the 338-residue chain is Aspartate carbamoyltransferase catalytic subunit (338 aa).

Arginine 72 and threonine 73 together coordinate carbamoyl phosphate. L-aspartate is bound at residue lysine 100. The carbamoyl phosphate site is built by arginine 122, histidine 152, and glutamine 155. Arginine 186 and arginine 243 together coordinate L-aspartate. Carbamoyl phosphate contacts are provided by glycine 284 and proline 285.

This sequence belongs to the aspartate/ornithine carbamoyltransferase superfamily. ATCase family. In terms of assembly, heterododecamer (2C3:3R2) of six catalytic PyrB chains organized as two trimers (C3), and six regulatory PyrI chains organized as three dimers (R2).

It carries out the reaction carbamoyl phosphate + L-aspartate = N-carbamoyl-L-aspartate + phosphate + H(+). The protein operates within pyrimidine metabolism; UMP biosynthesis via de novo pathway; (S)-dihydroorotate from bicarbonate: step 2/3. Catalyzes the condensation of carbamoyl phosphate and aspartate to form carbamoyl aspartate and inorganic phosphate, the committed step in the de novo pyrimidine nucleotide biosynthesis pathway. The polypeptide is Aspartate carbamoyltransferase catalytic subunit (Acinetobacter baumannii (strain ACICU)).